The primary structure comprises 273 residues: Rhamnulose-1-phosphate aldolase (273 aa).

Glu117 is a catalytic residue. 3 residues coordinate Zn(2+): His140, His142, and His211.

Belongs to the aldolase class II family. RhaD subfamily. Zn(2+) serves as cofactor.

The protein localises to the cytoplasm. It carries out the reaction L-rhamnulose 1-phosphate = (S)-lactaldehyde + dihydroxyacetone phosphate. The protein operates within carbohydrate degradation; L-rhamnose degradation; glycerone phosphate from L-rhamnose: step 3/3. Its function is as follows. Catalyzes the reversible cleavage of L-rhamnulose-1-phosphate to dihydroxyacetone phosphate (DHAP) and L-lactaldehyde. The sequence is that of Rhamnulose-1-phosphate aldolase from Listeria monocytogenes serotype 4b (strain CLIP80459).